The following is a 172-amino-acid chain: Bifunctional protein PyrR (172 aa).

The PRPP-binding signature appears at 90–102; that stretch reads LVLIDDVLMSGRT.

It belongs to the purine/pyrimidine phosphoribosyltransferase family. PyrR subfamily.

The enzyme catalyses UMP + diphosphate = 5-phospho-alpha-D-ribose 1-diphosphate + uracil. Functionally, regulates the transcription of the pyrimidine nucleotide (pyr) operon in response to exogenous pyrimidines. Also displays a weak uracil phosphoribosyltransferase activity which is not physiologically significant. The sequence is that of Bifunctional protein PyrR from Pseudomonas putida (strain W619).